Consider the following 361-residue polypeptide: Molybdopterin synthase catalytic subunit (361 aa).

Residues 101-102 (HR), Lys-117, and 124-126 (KKE) each bind substrate.

Belongs to the MoaE family. MOCS2B subfamily. In terms of assembly, heterotetramer; composed of 2 small (Mocs2A) and 2 large (Mocs2B) subunits.

It localises to the cytoplasm. The catalysed reaction is 2 [molybdopterin-synthase sulfur-carrier protein]-C-terminal-Gly-aminoethanethioate + cyclic pyranopterin phosphate + H2O = molybdopterin + 2 [molybdopterin-synthase sulfur-carrier protein]-C-terminal Gly-Gly + 2 H(+). It functions in the pathway cofactor biosynthesis; molybdopterin biosynthesis. In terms of biological role, catalytic subunit of the molybdopterin synthase complex, a complex that catalyzes the conversion of precursor Z into molybdopterin. Acts by mediating the incorporation of 2 sulfur atoms from thiocarboxylated Mocs2A into precursor Z to generate a dithiolene group. This Drosophila pseudoobscura pseudoobscura (Fruit fly) protein is Molybdopterin synthase catalytic subunit.